A 118-amino-acid chain; its full sequence is Large ribosomal subunit protein eL22 (118 aa).

It belongs to the eukaryotic ribosomal protein eL22 family.

The polypeptide is Large ribosomal subunit protein eL22 (RPL22) (Tetrahymena thermophila (strain SB210)).